The primary structure comprises 158 residues: NAD(P)H-quinone oxidoreductase subunit J, chloroplastic (158 aa).

It belongs to the complex I 30 kDa subunit family. NDH is composed of at least 16 different subunits, 5 of which are encoded in the nucleus.

The protein localises to the plastid. The protein resides in the chloroplast thylakoid membrane. It carries out the reaction a plastoquinone + NADH + (n+1) H(+)(in) = a plastoquinol + NAD(+) + n H(+)(out). The catalysed reaction is a plastoquinone + NADPH + (n+1) H(+)(in) = a plastoquinol + NADP(+) + n H(+)(out). In terms of biological role, NDH shuttles electrons from NAD(P)H:plastoquinone, via FMN and iron-sulfur (Fe-S) centers, to quinones in the photosynthetic chain and possibly in a chloroplast respiratory chain. The immediate electron acceptor for the enzyme in this species is believed to be plastoquinone. Couples the redox reaction to proton translocation, and thus conserves the redox energy in a proton gradient. This is NAD(P)H-quinone oxidoreductase subunit J, chloroplastic from Spinacia oleracea (Spinach).